The sequence spans 447 residues: Trigger factor (447 aa).

The region spanning 164–249 is the PPIase FKBP-type domain; that stretch reads GNQVTFDFEG…VKLVEKSKLP (86 aa).

This sequence belongs to the FKBP-type PPIase family. Tig subfamily.

The protein resides in the cytoplasm. It carries out the reaction [protein]-peptidylproline (omega=180) = [protein]-peptidylproline (omega=0). Involved in protein export. Acts as a chaperone by maintaining the newly synthesized protein in an open conformation. Functions as a peptidyl-prolyl cis-trans isomerase. The chain is Trigger factor from Psychrobacter arcticus (strain DSM 17307 / VKM B-2377 / 273-4).